We begin with the raw amino-acid sequence, 551 residues long: Thermolysin (551 aa).

A signal peptide spans 1-31 (MKRKMKMKLVRFGLAAGLAAQVFFLPYNALA). Residues 32 to 235 (STEHVTWNQQ…DAAKPGDVKS (204 aa)) constitute a propeptide, activation peptide. Residues Asp-292, Asp-294, Gln-296, and Asp-373 each coordinate Ca(2+). Residue His-377 participates in Zn(2+) binding. Glu-378 is a catalytic residue. Residues His-381 and Glu-401 each coordinate Zn(2+). Residues Glu-412, Asn-418, Asp-420, Glu-422, Glu-425, Thr-429, Ile-432, and Asp-435 each contribute to the Ca(2+) site. His-466 acts as the Proton donor in catalysis.

Belongs to the peptidase M4 family. Ca(2+) is required as a cofactor. The cofactor is Zn(2+).

The protein localises to the secreted. The catalysed reaction is Preferential cleavage: Xaa-|-Leu &gt; Xaa-|-Phe.. Functionally, extracellular zinc metalloprotease. The chain is Thermolysin (nprS) from Geobacillus stearothermophilus (Bacillus stearothermophilus).